We begin with the raw amino-acid sequence, 479 residues long: Serine protease HTRA1A (479 aa).

An N-terminal signal peptide occupies residues 1-18 (MILVTLFCICALVTSLQA). One can recognise an IGFBP N-terminal domain in the interval 27-111 (VIGGCPSHCD…RGKQGVCVCK (85 aa)). 6 disulfides stabilise this stretch: Cys31-Cys56, Cys35-Cys58, Cys40-Cys59, Cys47-Cys62, Cys70-Cys87, and Cys81-Cys108. The 60-residue stretch at 96–155 (SATVRRRGKQGVCVCKSSDPVCGSDGVSYRDICELKRVSNRAQSLQQPPVLFIQRGACGT) folds into the Kazal-like domain. The serine protease stretch occupies residues 203–363 (GSGFVVSDDG…IPSDKIRQFL (161 aa)). Catalysis depends on charge relay system residues His219, Asp249, and Ser327. The region spanning 364–466 (AESYDRLARG…LRVVVRRGNE (103 aa)) is the PDZ domain.

The protein belongs to the peptidase S1C family. As to quaternary structure, forms homotrimers. In the presence of substrate, may form higher-order multimers in a PDZ-independent manner.

The protein localises to the secreted. It is found in the cytoplasm. Its subcellular location is the cytosol. In terms of biological role, serine protease with a variety of targets, including extracellular matrix proteins and proteoglycans. Through cleavage of proteoglycans, may release soluble FGF-glycosaminoglycan complexes that promote the range and intensity of FGF signals in the extracellular space. Regulates the availability of insulin-like growth factors (IGFs) by cleaving IGF-binding proteins. Inhibits signaling mediated by TGF-beta family members. Consequently, may regulate many physiological processes. Intracellularly, degrades TSC2, leading to the activation of TSC2 downstream targets. This is Serine protease HTRA1A (htra1a) from Danio rerio (Zebrafish).